The chain runs to 217 residues: Large ribosomal subunit protein uL1A (217 aa).

Ser-2 carries the N-acetylserine modification. An N6-methyllysine; by RKM5 modification is found at Lys-47. Phosphoserine is present on residues Ser-79 and Ser-86.

It belongs to the universal ribosomal protein uL1 family. In terms of assembly, component of the large ribosomal subunit (LSU). Mature yeast ribosomes consist of a small (40S) and a large (60S) subunit. The 40S small subunit contains 1 molecule of ribosomal RNA (18S rRNA) and 33 different proteins (encoded by 57 genes). The large 60S subunit contains 3 rRNA molecules (25S, 5.8S and 5S rRNA) and 46 different proteins (encoded by 81 genes). uL1 forms part of the L1 stalk. In terms of processing, N-terminally acetylated by acetyltransferase NatA.

The protein resides in the cytoplasm. Its function is as follows. Component of the ribosome, a large ribonucleoprotein complex responsible for the synthesis of proteins in the cell. The small ribosomal subunit (SSU) binds messenger RNAs (mRNAs) and translates the encoded message by selecting cognate aminoacyl-transfer RNA (tRNA) molecules. The large subunit (LSU) contains the ribosomal catalytic site termed the peptidyl transferase center (PTC), which catalyzes the formation of peptide bonds, thereby polymerizing the amino acids delivered by tRNAs into a polypeptide chain. The nascent polypeptides leave the ribosome through a tunnel in the LSU and interact with protein factors that function in enzymatic processing, targeting, and the membrane insertion of nascent chains at the exit of the ribosomal tunnel. uL1 forms part of the L1 stalk, a mobile element that plays a role in evacuating the exit-site tRNA. The chain is Large ribosomal subunit protein uL1A from Saccharomyces cerevisiae (strain ATCC 204508 / S288c) (Baker's yeast).